Consider the following 416-residue polypeptide: Phosphoglycerate kinase (416 aa).

(2R)-3-phosphoglycerate is bound by residues Val23, Asp24, Phe25, Asn26, Asn38, Arg39, Ser62, His63, Gly65, Arg66, Leu121, Arg122, His169, and Arg170. Gly213 contributes to the ADP binding site. Gly213 provides a ligand contact to CDP. The AMP site is built by Ala214 and Lys215. ATP contacts are provided by Ala214 and Lys215. Ala214 contributes to the Mg(2+) binding site. Asp218 is a CDP binding site. Asp218 lines the Mg(2+) pocket. Lys219 serves as a coordination point for AMP. Residue Lys219 coordinates ATP. Gly237 is an ADP binding site. Gly237 provides a ligand contact to CDP. Gly238 and Gly312 together coordinate AMP. 2 residues coordinate ATP: Gly238 and Gly312. Residues Gly337 and Phe342 each coordinate CDP. Phe342 is an ADP binding site. Glu343 provides a ligand contact to AMP. Asp374 serves as a coordination point for Mg(2+). Thr375 is a binding site for ATP.

It belongs to the phosphoglycerate kinase family. As to quaternary structure, monomer. Mg(2+) serves as cofactor.

It carries out the reaction (2R)-3-phosphoglycerate + ATP = (2R)-3-phospho-glyceroyl phosphate + ADP. It functions in the pathway carbohydrate degradation; glycolysis; pyruvate from D-glyceraldehyde 3-phosphate: step 2/5. The chain is Phosphoglycerate kinase (PGK) from Plasmodium falciparum (isolate 3D7).